The following is a 500-amino-acid chain: Intermediate filament protein ifc-1 (500 aa).

The segment at 1–36 (MSLYGGIPTNLVSGMSSAGAICTTQIRDAREREKRE) is head. The IF rod domain occupies 33–383 (EKREIGLLND…VLLNGANVTT (351 aa)). The interval 37-68 (IGLLNDRLADYIEKVRFLKAQNHVLSHDIEIL) is coil 1A. The tract at residues 69–81 (RRGFSGGGHISSF) is linker 1. The interval 82 to 219 (FESEISNCTV…TENSSRIEQE (138 aa)) is coil 1B. A linker 12 region spans residues 220–237 (LIYIHRDTTLENRDYFRQ). Positions 238–383 (ELQAAMRDIR…VLLNGANVTT (146 aa)) are coil 2. The tract at residues 384-496 (YVSNSTGAAG…RHHESSYSYS (113 aa)) is tail.

Belongs to the intermediate filament family.

The protein resides in the cytoplasm. In terms of biological role, cytoplasmic intermediate filaments provide mechanical strength to cells. Not essential protein. In Caenorhabditis elegans, this protein is Intermediate filament protein ifc-1 (ifc-1).